Consider the following 418-residue polypeptide: UDP-glucuronic acid decarboxylase 1 (418 aa).

Residues 1 to 17 (MMRMSWMVTVINRRMMK) lie on the Cytoplasmic side of the membrane. The chain crosses the membrane as a helical; Signal-anchor for type II membrane protein span at residues 18-38 (ILIALALIAYIASVWGTYANM). Residues 39-418 (RSIQEHGEMK…RMKKGRPRHN (380 aa)) are Lumenal-facing. The NAD(+) site is built by glycine 96, phenylalanine 97, valine 98, aspartate 117, asparagine 118, phenylalanine 120, threonine 121, glycine 122, aspartate 142, and valine 143. 2 residues coordinate UDP-alpha-D-glucuronate: leucine 147 and tyrosine 148. Residues leucine 157 and serine 159 each coordinate NAD(+). Lysine 175 is a UDP-alpha-D-glucuronate binding site. NAD(+) is bound at residue threonine 176. Positions 183, 186, 189, and 190 each coordinate UDP-alpha-D-glucuronate. Alanine 198, tyrosine 229, and lysine 233 together coordinate NAD(+). Catalysis depends on tyrosine 229, which acts as the Proton acceptor. Positions 243, 246, and 247 each coordinate UDP-alpha-D-glucuronate. NAD(+) is bound by residues threonine 259, histidine 265, and arginine 270. N-linked (GlcNAc...) asparagine glycans are attached at residues asparagine 314 and asparagine 383. Positions 397-418 (ANNQYIPKPKAARMKKGRPRHN) are disordered. Residues 406 to 418 (KAARMKKGRPRHN) are compositionally biased toward basic residues.

The protein belongs to the NAD(P)-dependent epimerase/dehydratase family. UDP-glucuronic acid decarboxylase subfamily. In terms of assembly, homodimer and homotetramer. NAD(+) is required as a cofactor.

It is found in the golgi apparatus. It localises to the golgi stack membrane. The catalysed reaction is UDP-alpha-D-glucuronate + H(+) = UDP-alpha-D-xylose + CO2. It participates in nucleotide-sugar biosynthesis; UDP-alpha-D-xylose biosynthesis; UDP-alpha-D-xylose from UDP-alpha-D-glucuronate: step 1/1. Catalyzes the NAD-dependent decarboxylation of UDP-glucuronic acid to UDP-xylose. Necessary for the biosynthesis of the core tetrasaccharide in glycosaminoglycan biosynthesis. Essential during embryogenesis for craniofacial development. The sequence is that of UDP-glucuronic acid decarboxylase 1 from Danio rerio (Zebrafish).